We begin with the raw amino-acid sequence, 162 residues long: Sec-independent protein translocase protein TatB (162 aa).

The chain crosses the membrane as a helical span at residues methionine 1–glycine 21. Disordered regions lie at residues alanine 69–glutamate 111 and alanine 124–alanine 162. Composition is skewed to basic and acidic residues over residues alanine 83–glutamate 111 and alanine 124–glutamate 141. The segment covering alanine 144–serine 155 has biased composition (low complexity).

The protein belongs to the TatB family. In terms of assembly, the Tat system comprises two distinct complexes: a TatABC complex, containing multiple copies of TatA, TatB and TatC subunits, and a separate TatA complex, containing only TatA subunits. Substrates initially bind to the TatABC complex, which probably triggers association of the separate TatA complex to form the active translocon.

The protein localises to the cell inner membrane. Part of the twin-arginine translocation (Tat) system that transports large folded proteins containing a characteristic twin-arginine motif in their signal peptide across membranes. Together with TatC, TatB is part of a receptor directly interacting with Tat signal peptides. TatB may form an oligomeric binding site that transiently accommodates folded Tat precursor proteins before their translocation. The chain is Sec-independent protein translocase protein TatB from Ruegeria sp. (strain TM1040) (Silicibacter sp.).